The primary structure comprises 553 residues: Hydroxylamine reductase (553 aa).

The [2Fe-2S] cluster site is built by Cys-3, Cys-6, Cys-18, and Cys-25. Hybrid [4Fe-2O-2S] cluster is bound by residues His-252, Glu-276, Cys-320, Cys-408, Cys-436, Cys-461, Glu-495, and Lys-497. Cys-408 bears the Cysteine persulfide mark.

This sequence belongs to the HCP family. [2Fe-2S] cluster is required as a cofactor. It depends on hybrid [4Fe-2O-2S] cluster as a cofactor.

It localises to the cytoplasm. It carries out the reaction A + NH4(+) + H2O = hydroxylamine + AH2 + H(+). Functionally, catalyzes the reduction of hydroxylamine to form NH(3) and H(2)O. In Aliivibrio fischeri (strain ATCC 700601 / ES114) (Vibrio fischeri), this protein is Hydroxylamine reductase.